Consider the following 280-residue polypeptide: Ribosomal RNA small subunit methyltransferase A (280 aa).

Residues Asn18, Leu20, Gly45, Glu66, Asp89, and Asn110 each contribute to the S-adenosyl-L-methionine site.

It belongs to the class I-like SAM-binding methyltransferase superfamily. rRNA adenine N(6)-methyltransferase family. RsmA subfamily.

Its subcellular location is the cytoplasm. It carries out the reaction adenosine(1518)/adenosine(1519) in 16S rRNA + 4 S-adenosyl-L-methionine = N(6)-dimethyladenosine(1518)/N(6)-dimethyladenosine(1519) in 16S rRNA + 4 S-adenosyl-L-homocysteine + 4 H(+). Its function is as follows. Specifically dimethylates two adjacent adenosines (A1518 and A1519) in the loop of a conserved hairpin near the 3'-end of 16S rRNA in the 30S particle. May play a critical role in biogenesis of 30S subunits. The chain is Ribosomal RNA small subunit methyltransferase A from Cupriavidus necator (strain ATCC 17699 / DSM 428 / KCTC 22496 / NCIMB 10442 / H16 / Stanier 337) (Ralstonia eutropha).